Consider the following 150-residue polypeptide: Histone deacetylase complex subunit SAP18 (150 aa).

Belongs to the SAP18 family. Forms a complex with SIN3 and histone deacetylase. Interacts with the N-terminal residues of TRL. Interacts with BCD; in vitro and yeast cells.

The protein resides in the nucleus. The protein localises to the cytoplasm. In terms of biological role, involved in the tethering of the SIN3 complex to core histone proteins. Interacts with bicoid (bcd) to repress transcription of bicoid target genes in the anterior tip of the embryo; a process known as retraction. Interacts with Trl and binds to Polycomb response elements at the bithorax complex. May contribute to the regulation of other homeotic gene expressions. The sequence is that of Histone deacetylase complex subunit SAP18 (Bin1) from Drosophila melanogaster (Fruit fly).